The following is a 367-amino-acid chain: Flagellar P-ring protein (367 aa).

An N-terminal signal peptide occupies residues 1-22; the sequence is MRRMLVIRWILAIHLIATQVFA.

Belongs to the FlgI family. As to quaternary structure, the basal body constitutes a major portion of the flagellar organelle and consists of four rings (L,P,S, and M) mounted on a central rod.

The protein resides in the periplasm. Its subcellular location is the bacterial flagellum basal body. In terms of biological role, assembles around the rod to form the L-ring and probably protects the motor/basal body from shearing forces during rotation. The sequence is that of Flagellar P-ring protein from Legionella pneumophila (strain Corby).